An 85-amino-acid chain; its full sequence is Small ribosomal subunit protein uS17 (85 aa).

This sequence belongs to the universal ribosomal protein uS17 family. Part of the 30S ribosomal subunit.

In terms of biological role, one of the primary rRNA binding proteins, it binds specifically to the 5'-end of 16S ribosomal RNA. This chain is Small ribosomal subunit protein uS17, found in Geobacter sulfurreducens (strain ATCC 51573 / DSM 12127 / PCA).